The sequence spans 422 residues: Glutamyl-tRNA reductase (422 aa).

Substrate is bound by residues 49-52 (TCNR), serine 107, 112-114 (EPQ), and glutamine 118. Catalysis depends on cysteine 50, which acts as the Nucleophile. Residue 187–192 (GAGETI) coordinates NADP(+).

The protein belongs to the glutamyl-tRNA reductase family. In terms of assembly, homodimer.

The catalysed reaction is (S)-4-amino-5-oxopentanoate + tRNA(Glu) + NADP(+) = L-glutamyl-tRNA(Glu) + NADPH + H(+). It functions in the pathway porphyrin-containing compound metabolism; protoporphyrin-IX biosynthesis; 5-aminolevulinate from L-glutamyl-tRNA(Glu): step 1/2. Its function is as follows. Catalyzes the NADPH-dependent reduction of glutamyl-tRNA(Glu) to glutamate 1-semialdehyde (GSA). In Pseudomonas paraeruginosa (strain DSM 24068 / PA7) (Pseudomonas aeruginosa (strain PA7)), this protein is Glutamyl-tRNA reductase.